A 467-amino-acid chain; its full sequence is Glycogen synthase kinase-3 (467 aa).

Basic and acidic residues predominate over residues 1–20 (MSSKDQILEKDKKETDDNGN). The interval 1 to 42 (MSSKDQILEKDKKETDDNGNKKTTTTTSSSSSSSSSSKPRSN) is disordered. The span at 23–37 (TTTTTSSSSSSSSSS) shows a compositional bias: low complexity. The 284-residue stretch at 56-339 (YITEGVIGNG…PVEICAHPFF (284 aa)) folds into the Protein kinase domain. Residues 62-70 (IGNGSFGVV) and Lys85 each bind ATP. Asp179 (proton acceptor) is an active-site residue. Phosphotyrosine; by zakA is present on residues Tyr214 and Tyr220. The interval 400–467 (SSNQSSSSNS…TTTTTTTSNH (68 aa)) is disordered.

Belongs to the protein kinase superfamily. CMGC Ser/Thr protein kinase family. GSK-3 subfamily. The cofactor is Mg(2+).

It catalyses the reaction L-seryl-[tau protein] + ATP = O-phospho-L-seryl-[tau protein] + ADP + H(+). It carries out the reaction L-threonyl-[tau protein] + ATP = O-phospho-L-threonyl-[tau protein] + ADP + H(+). Its activity is regulated as follows. Inhibited by lithium. Lithium inhibition is competitive with respect to magnesium but non-competitive with respect to the peptide substrate. Functionally, during cellular differentiation, may mediate an extracellular cyclic AMP stimulated signal transduction pathway that regulates prespore and prestalk B-cell proportions through inhibition of stalk cell formation and induction of prespore cell differentiation. The cAMP receptor carC appears to activate gskA via the tyrosine kinases zakA and zak2, to stimulate prespore differentiation, while carD appears to negatively regulate gskA, to promote prestalk formation. This is Glycogen synthase kinase-3 (gskA) from Dictyostelium discoideum (Social amoeba).